Here is a 452-residue protein sequence, read N- to C-terminus: tRNA modification GTPase MnmE (452 aa).

(6S)-5-formyl-5,6,7,8-tetrahydrofolate is bound by residues R21, E78, and K118. The TrmE-type G domain occupies 214 to 375; the sequence is GMKVVIAGRP…LREHLKKSMG (162 aa). A K(+)-binding site is contributed by N224. GTP is bound by residues 224 to 229, 243 to 249, and 268 to 271; these read NAGKSS, TNIAGTT, and DTAG. S228 serves as a coordination point for Mg(2+). T243, I245, and T248 together coordinate K(+). T249 lines the Mg(2+) pocket. Residue K452 participates in (6S)-5-formyl-5,6,7,8-tetrahydrofolate binding.

This sequence belongs to the TRAFAC class TrmE-Era-EngA-EngB-Septin-like GTPase superfamily. TrmE GTPase family. As to quaternary structure, homodimer. Heterotetramer of two MnmE and two MnmG subunits. K(+) is required as a cofactor.

Its subcellular location is the cytoplasm. Its function is as follows. Exhibits a very high intrinsic GTPase hydrolysis rate. Involved in the addition of a carboxymethylaminomethyl (cmnm) group at the wobble position (U34) of certain tRNAs, forming tRNA-cmnm(5)s(2)U34. This chain is tRNA modification GTPase MnmE, found in Actinobacillus pleuropneumoniae serotype 5b (strain L20).